A 434-amino-acid chain; its full sequence is Putative nuclease OPG089 (434 aa).

Mg(2+)-binding residues include aspartate 33, aspartate 74, glutamate 168, aspartate 170, aspartate 196, and aspartate 198.

Belongs to the XPG/RAD2 endonuclease family. FEN1 subfamily. Mg(2+) serves as cofactor.

It localises to the virion. Its function is as follows. Putative nuclease that seems to be required for double-strand break repair, homologous recombination, and production of full-length viral genomic DNA. In Vaccinia virus (strain Copenhagen) (VACV), this protein is Putative nuclease OPG089 (OPG089).